Consider the following 188-residue polypeptide: UPF0232 protein RHA1_ro03670 (188 aa).

3 disordered regions span residues 1–20, 31–78, and 166–188; these read MTDD…PEVK, EARA…QPFG, and PTAP…DTYG. Residues 7 to 16 are compositionally biased toward low complexity; that stretch reads PTAPAAAAPE.

This sequence belongs to the UPF0232 family.

This chain is UPF0232 protein RHA1_ro03670, found in Rhodococcus jostii (strain RHA1).